Reading from the N-terminus, the 270-residue chain is Interleukin-1 beta (270 aa).

Positions 1–118 are excised as a propeptide; sequence MATVPEPTSE…VYDDDAFVCD (118 aa).

Belongs to the IL-1 family. Monomer. In its precursor form, weakly interacts with full-length MEFV; the mature cytokine does not interact at all. Interacts with integrins ITGAV:ITGBV and ITGA5:ITGB1; integrin-binding is required for IL1B signaling. Interacts with cargo receptor TMED10; the interaction is direct and is required for the secretion of IL1B mature form. Interacts with HSP90AB1; the interaction facilitates cargo translocation into the ERGIC. Interacts with HSP90B1; the interaction facilitates cargo translocation into the ERGIC.

The protein localises to the cytoplasm. The protein resides in the cytosol. Its subcellular location is the secreted. It localises to the lysosome. It is found in the extracellular exosome. Functionally, potent pro-inflammatory cytokine. Initially discovered as the major endogenous pyrogen, induces prostaglandin synthesis, neutrophil influx and activation, T-cell activation and cytokine production, B-cell activation and antibody production, and fibroblast proliferation and collagen production. Promotes Th17 differentiation of T-cells. Synergizes with IL12/interleukin-12 to induce IFNG synthesis from T-helper 1 (Th1) cells. Plays a role in angiogenesis by inducing VEGF production synergistically with TNF and IL6. Involved in transduction of inflammation downstream of pyroptosis: its mature form is specifically released in the extracellular milieu by passing through the gasdermin-D (GSDMD) pore. This is Interleukin-1 beta (IL1B) from Eumetopias jubatus (Steller sea lion).